The following is a 291-amino-acid chain: 3-hydroxy-5-phosphonooxypentane-2,4-dione thiolase (291 aa).

The active-site Schiff-base intermediate with substrate is K203.

The protein belongs to the DeoC/FbaB aldolase family. As to quaternary structure, homodecamer.

The protein resides in the cytoplasm. The enzyme catalyses dihydroxyacetone phosphate + acetyl-CoA = 3-hydroxy-2,4-dioxopentyl phosphate + CoA. Its function is as follows. Involved in the degradation of phospho-AI-2, thereby terminating induction of the lsr operon and closing the AI-2 signaling cycle. Catalyzes the transfer of an acetyl moiety from 3-hydroxy-5-phosphonooxypentane-2,4-dione to CoA to form glycerone phosphate and acetyl-CoA. This chain is 3-hydroxy-5-phosphonooxypentane-2,4-dione thiolase, found in Salmonella typhimurium (strain LT2 / SGSC1412 / ATCC 700720).